The chain runs to 756 residues: Serine/threonine-protein kinase CBK1 (756 aa).

2 disordered regions span residues 1–180 (MYNS…SYSS) and 242–261 (QQQQ…NNGT). A compositionally biased stretch (low complexity) spans 23–34 (QQQDQQHQQQQQ). Over residues 53 to 77 (FSSNYMKEQGSHQSLQEHLQRETGN) the composition is skewed to polar residues. The residue at position 109 (Thr109) is a Phosphothreonine. The span at 120–180 (HNNNSQSMVQ…TLRSNGSYSS (61 aa)) shows a compositional bias: polar residues. Residues 242–255 (QQQQQQQSQSPVQS) are compositionally biased toward low complexity. The Protein kinase domain occupies 352 to 672 (FHTVKVIGKG…ADEIKSHPFF (321 aa)). ATP is bound by residues 358–366 (IGKGAFGEV) and Lys381. The active-site Proton acceptor is Asp475. The 82-residue stretch at 673–754 (RGVDWNTIRQ…SRFDYLTRKN (82 aa)) folds into the AGC-kinase C-terminal domain. Positions 707–732 (NVPDSPAMAQAAKQREQMTKQGGSAP) are disordered.

It belongs to the protein kinase superfamily. STE Ser/Thr protein kinase family. COT1 subfamily. As to quaternary structure, associates with PAG1/TAO3 and interacts with MOB2.

It catalyses the reaction L-seryl-[protein] + ATP = O-phospho-L-seryl-[protein] + ADP + H(+). The catalysed reaction is L-threonyl-[protein] + ATP = O-phospho-L-threonyl-[protein] + ADP + H(+). Functionally, protein kinase that seems to play a role in the regulation of cell morphogenesis and proliferation. The sequence is that of Serine/threonine-protein kinase CBK1 (CBK1) from Saccharomyces cerevisiae (strain ATCC 204508 / S288c) (Baker's yeast).